Consider the following 283-residue polypeptide: Protease HtpX (283 aa).

2 consecutive transmembrane segments (helical) span residues 4 to 24 (ILLFLATNMAVMLVLGIILNV) and 33 to 53 (GGILIMALLFGFAGSLISLFL). His-139 contacts Zn(2+). Glu-140 is a catalytic residue. Zn(2+) is bound at residue His-143. Helical transmembrane passes span 147 to 167 (GDMVTMALLQGVLNTFVIFLS) and 190 to 210 (IYFLVSMVLEMLFGVLASIIA). Residue Glu-218 coordinates Zn(2+).

This sequence belongs to the peptidase M48B family. Requires Zn(2+) as cofactor.

The protein resides in the cell inner membrane. The polypeptide is Protease HtpX (Haemophilus influenzae (strain 86-028NP)).